A 196-amino-acid polypeptide reads, in one-letter code: SPRY domain-containing protein 7 (196 aa).

An N-acetylalanine modification is found at alanine 2. Residues 2–184 enclose the B30.2/SPRY domain; the sequence is ATSVLCCLRC…FSEFYHTPPP (183 aa).

The chain is SPRY domain-containing protein 7 (SPRYD7) from Homo sapiens (Human).